The following is a 60-amino-acid chain: Lantibiotic Pep5 (60 aa).

The propeptide occupies 1-26 (MKNNKNLFDLEIKKETSQNTDELEPQ). The tract at residues 1–29 (MKNNKNLFDLEIKKETSQNTDELEPQTAG) is disordered. Position 27 is a 2-oxobutanoic acid (threonine 27). A cross-link (lanthionine (Ser-Cys)) is located at residues 35–39 (SVKQC). 2,3-didehydrobutyrine occurs at positions 42 and 46. Positions 50–53 (TVSC) form a cross-link, beta-methyllanthionine (Thr-Cys). A cross-link (lanthionine (Ser-Cys)) is located at residues 52-59 (SCKGKNGC).

It belongs to the type A lantibiotic family. Maturation of lantibiotics involves the enzymatic conversion of Thr, and Ser into dehydrated AA and the formation of thioether bonds with cysteine. This is followed by membrane translocation and cleavage of the modified precursor. In terms of processing, after proteolysis of the propeptide, the N-terminal 2,3-didehydrobutyrine hydrolyzes to 2-oxobutanoic acid, possibly spontaneously.

Lanthionine-containing peptide antibiotic (lantibiotic) active on Gram-positive bacteria. The bactericidal activity of lantibiotics is based on depolarization of energized bacterial cytoplasmic membranes, initiated by the formation of aqueous transmembrane pores. This Staphylococcus epidermidis protein is Lantibiotic Pep5 (pepA).